A 74-amino-acid polypeptide reads, in one-letter code: UPF0248 protein MK0350 (74 aa).

Belongs to the UPF0248 family.

The protein is UPF0248 protein MK0350 of Methanopyrus kandleri (strain AV19 / DSM 6324 / JCM 9639 / NBRC 100938).